Reading from the N-terminus, the 237-residue chain is Sugar fermentation stimulation protein homolog (237 aa).

Belongs to the SfsA family.

The chain is Sugar fermentation stimulation protein homolog from Pseudomonas fluorescens (strain ATCC BAA-477 / NRRL B-23932 / Pf-5).